We begin with the raw amino-acid sequence, 417 residues long: Serine hydroxymethyltransferase (417 aa).

(6S)-5,6,7,8-tetrahydrofolate is bound by residues Leu-120 and 124 to 126 (GHL). An N6-(pyridoxal phosphate)lysine modification is found at Lys-229. Position 354–356 (354–356 (SPF)) interacts with (6S)-5,6,7,8-tetrahydrofolate.

Belongs to the SHMT family. Homodimer. The cofactor is pyridoxal 5'-phosphate.

Its subcellular location is the cytoplasm. The catalysed reaction is (6R)-5,10-methylene-5,6,7,8-tetrahydrofolate + glycine + H2O = (6S)-5,6,7,8-tetrahydrofolate + L-serine. It participates in one-carbon metabolism; tetrahydrofolate interconversion. The protein operates within amino-acid biosynthesis; glycine biosynthesis; glycine from L-serine: step 1/1. Functionally, catalyzes the reversible interconversion of serine and glycine with tetrahydrofolate (THF) serving as the one-carbon carrier. This reaction serves as the major source of one-carbon groups required for the biosynthesis of purines, thymidylate, methionine, and other important biomolecules. Also exhibits THF-independent aldolase activity toward beta-hydroxyamino acids, producing glycine and aldehydes, via a retro-aldol mechanism. In Acinetobacter radioresistens, this protein is Serine hydroxymethyltransferase.